We begin with the raw amino-acid sequence, 584 residues long: BEL1-like homeodomain protein 8 (584 aa).

An SR/KY domain region spans residues 266-282 (SRFLEPAQKMLEEFCIS). The interval 292–317 (ESTSMEDDDDDDDNLSGFSSSSEPLE) is disordered. Residues 295-305 (SMEDDDDDDDN) show a composition bias toward acidic residues. Residues 316 to 387 (LEPKNRLKKA…ALRTAIAEHV (72 aa)) are BELL domain. The segment at residues 424 to 486 (IWRPQRGLPE…NARVRLWKPM (63 aa)) is a DNA-binding region (homeobox). The interval 503-529 (TSHNIEPSNRPNTVSSPSHEQTLTGLS) is disordered.

Belongs to the TALE/BELL homeobox family. May form heterodimeric complex with the TALE/KNOX proteins STM and KNAT1/BP.

It localises to the nucleus. Its function is as follows. Required for specifying floral primordia and establishing early internode patterning events during inflorescence development. This Arabidopsis thaliana (Mouse-ear cress) protein is BEL1-like homeodomain protein 8 (BLH8).